The sequence spans 240 residues: 7-cyano-7-deazaguanine synthase (240 aa).

14 to 24 contributes to the ATP binding site; it reads FSGGQDSATCL. Zn(2+) is bound by residues cysteine 202, cysteine 217, cysteine 220, and cysteine 223.

It belongs to the QueC family. It depends on Zn(2+) as a cofactor.

The catalysed reaction is 7-carboxy-7-deazaguanine + NH4(+) + ATP = 7-cyano-7-deazaguanine + ADP + phosphate + H2O + H(+). It participates in purine metabolism; 7-cyano-7-deazaguanine biosynthesis. Its function is as follows. Catalyzes the ATP-dependent conversion of 7-carboxy-7-deazaguanine (CDG) to 7-cyano-7-deazaguanine (preQ(0)). The polypeptide is 7-cyano-7-deazaguanine synthase (Rhodopseudomonas palustris (strain BisB18)).